The primary structure comprises 201 residues: Putative 3-methyladenine DNA glycosylase (201 aa).

The protein belongs to the DNA glycosylase MPG family.

The polypeptide is Putative 3-methyladenine DNA glycosylase (Clostridium novyi (strain NT)).